Reading from the N-terminus, the 329-residue chain is Interleukin-12 subunit beta (329 aa).

A signal peptide spans 1–22 (MCHQWLVLSWFSLVLLASPLMA). The Ig-like C2-type domain maps to 29 to 106 (DVYVVELDWY…LSHSHLLLHK (78 aa)). A disulfide bond links C50 and C90. Residues N125, N135, and N223 are each glycosylated (N-linked (GlcNAc...) asparagine). The region spanning 238–329 (PPKNLQLKPL…WSEWASVSCS (92 aa)) is the Fibronectin type-III domain.

The protein belongs to the IL-12B family. Heterodimer with IL12A; disulfide-linked. The heterodimer is known as interleukin IL-12. Heterodimer with IL23A; disulfide-linked. The heterodimer is known as interleukin IL-23. Also secreted as a monomer. Interacts with NBR1; this interaction promotes IL-12 secretion.

The protein localises to the secreted. Its function is as follows. Cytokine that can act as a growth factor for activated T and NK cells, enhance the lytic activity of NK/lymphokine-activated killer cells, and stimulate the production of IFN-gamma by resting PBMC. Associates with IL23A to form the IL-23 interleukin, a heterodimeric cytokine which functions in innate and adaptive immunity. IL-23 may constitute with IL-17 an acute response to infection in peripheral tissues. IL-23 binds to a heterodimeric receptor complex composed of IL12RB1 and IL23R, activates the Jak-Stat signaling cascade, stimulates memory rather than naive T-cells and promotes production of pro-inflammatory cytokines. IL-23 induces autoimmune inflammation and thus may be responsible for autoimmune inflammatory diseases and may be important for tumorigenesis. This Equus caballus (Horse) protein is Interleukin-12 subunit beta (IL12B).